We begin with the raw amino-acid sequence, 207 residues long: Phosphoserine phosphatase (207 aa).

The Nucleophile role is filled by Asp8. Mg(2+) is bound by residues Asp8 and Asp10. Catalysis depends on Asp10, which acts as the Proton donor. Substrate is bound by residues Glu17, Arg53, 96–97, and Lys141; that span reads SG. Position 164 (Asp164) interacts with Mg(2+). Asn167 contributes to the substrate binding site.

It belongs to the HAD-like hydrolase superfamily. SerB family. The cofactor is Mg(2+).

It catalyses the reaction O-phospho-L-serine + H2O = L-serine + phosphate. The enzyme catalyses O-phospho-D-serine + H2O = D-serine + phosphate. It functions in the pathway amino-acid biosynthesis; L-serine biosynthesis; L-serine from 3-phospho-D-glycerate: step 3/3. This chain is Phosphoserine phosphatase, found in Campylobacter jejuni subsp. doylei (strain ATCC BAA-1458 / RM4099 / 269.97).